Consider the following 477-residue polypeptide: Bifunctional protein HldE (477 aa).

The ribokinase stretch occupies residues 1–318; that stretch reads MKVTLPEFER…ENAVRGRADT (318 aa). The residue at position 179 (Lys179) is an N6-acetyllysine. Residue 195-198 participates in ATP binding; sequence NLSE. Residue Asp264 is part of the active site. The interval 344 to 477 is cytidylyltransferase; the sequence is MTNGVFDILH…IKKIQQDKKG (134 aa).

In the N-terminal section; belongs to the carbohydrate kinase PfkB family. This sequence in the C-terminal section; belongs to the cytidylyltransferase family. Homodimer.

The enzyme catalyses D-glycero-beta-D-manno-heptose 7-phosphate + ATP = D-glycero-beta-D-manno-heptose 1,7-bisphosphate + ADP + H(+). It carries out the reaction D-glycero-beta-D-manno-heptose 1-phosphate + ATP + H(+) = ADP-D-glycero-beta-D-manno-heptose + diphosphate. Its pathway is nucleotide-sugar biosynthesis; ADP-L-glycero-beta-D-manno-heptose biosynthesis; ADP-L-glycero-beta-D-manno-heptose from D-glycero-beta-D-manno-heptose 7-phosphate: step 1/4. It functions in the pathway nucleotide-sugar biosynthesis; ADP-L-glycero-beta-D-manno-heptose biosynthesis; ADP-L-glycero-beta-D-manno-heptose from D-glycero-beta-D-manno-heptose 7-phosphate: step 3/4. In terms of biological role, catalyzes the phosphorylation of D-glycero-D-manno-heptose 7-phosphate at the C-1 position to selectively form D-glycero-beta-D-manno-heptose-1,7-bisphosphate. Catalyzes the ADP transfer from ATP to D-glycero-beta-D-manno-heptose 1-phosphate, yielding ADP-D-glycero-beta-D-manno-heptose. This chain is Bifunctional protein HldE, found in Escherichia coli O9:H4 (strain HS).